Consider the following 156-residue polypeptide: ATP synthase subunit b (156 aa).

Residues 7 to 29 (LFAQMVVFLVLAWFTMKFVWPPL) traverse the membrane as a helical segment.

Belongs to the ATPase B chain family. As to quaternary structure, F-type ATPases have 2 components, F(1) - the catalytic core - and F(0) - the membrane proton channel. F(1) has five subunits: alpha(3), beta(3), gamma(1), delta(1), epsilon(1). F(0) has three main subunits: a(1), b(2) and c(10-14). The alpha and beta chains form an alternating ring which encloses part of the gamma chain. F(1) is attached to F(0) by a central stalk formed by the gamma and epsilon chains, while a peripheral stalk is formed by the delta and b chains.

The protein localises to the cell inner membrane. F(1)F(0) ATP synthase produces ATP from ADP in the presence of a proton or sodium gradient. F-type ATPases consist of two structural domains, F(1) containing the extramembraneous catalytic core and F(0) containing the membrane proton channel, linked together by a central stalk and a peripheral stalk. During catalysis, ATP synthesis in the catalytic domain of F(1) is coupled via a rotary mechanism of the central stalk subunits to proton translocation. Functionally, component of the F(0) channel, it forms part of the peripheral stalk, linking F(1) to F(0). This is ATP synthase subunit b from Burkholderia ambifaria (strain MC40-6).